The chain runs to 180 residues: Fucolectin-2 (180 aa).

Positions 1–22 (MKVKMIMLLFQILAILTLKSDS) are cleaved as a signal peptide. An F5/8 type C-like region spans residues 31–179 (QENVALRGRA…VEVNVLFPAP (149 aa)). 4 residues coordinate Ca(2+): Asn58, Asp61, Asn63, and Ser72. 3 disulfide bridges follow: Cys73-Cys168, Cys104-Cys105, and Cys130-Cys146. Residues His75 and Arg101 each contribute to the alpha-L-fucose site. Positions 101–103 (RGD) match the Cell attachment site motif. Arg108 is an alpha-L-fucose binding site. Ca(2+) is bound by residues Cys168 and Glu169.

Belongs to the fucolectin family. In terms of assembly, homotrimer. In terms of tissue distribution, parenchymal hepatocytes.

It is found in the secreted. It localises to the extracellular space. Its function is as follows. Acts as a defensive agent. Recognizes blood group fucosylated oligosaccharides including A, B, H and Lewis B-type antigens. Does not recognize Lewis A antigen and has low affinity for monovalent haptens. This chain is Fucolectin-2, found in Anguilla japonica (Japanese eel).